The chain runs to 534 residues: Putative fimbrium tip subunit Fim1C (534 aa).

The first 21 residues, 1-21 (MKQYKLMQVALLAILLFGWAG), serve as a signal peptide directing secretion. C22 is lipidated: N-palmitoyl cysteine. C22 carries the S-diacylglycerol cysteine lipid modification. Positions 22 to 54 (CSQNEEEVPGNVRNGIVLNVTDTGIISNEPSTR) are excised as a propeptide.

It belongs to the bacteroidetes fimbrillin superfamily. Mfa-like family. As to quaternary structure, may be part of the fimbrial tip.

It localises to the fimbrium. The protein resides in the cell outer membrane. Its function is as follows. Probably a component of the fimbrium tip. Fimbriae are filamentous appendages on the cell surface that mediate cell adhesion and biofilm formation. The sequence is that of Putative fimbrium tip subunit Fim1C from Bacteroides ovatus (strain ATCC 8483 / DSM 1896 / JCM 5824 / BCRC 10623 / CCUG 4943 / NCTC 11153).